The chain runs to 331 residues: Thioredoxin-like fold domain-containing protein MRL7, chloroplastic (331 aa).

A chloroplast-targeting transit peptide spans 1–59 (MSFFAVACSAPRSSMLLTGLNSSFSDMHRSPLFVFPVTISSRSVKRFAAVSSDSVLDPE). Disordered regions lie at residues 52–105 (SDSV…ADAV) and 141–160 (GVDE…EDPD). The span at 142-160 (VDEEEEEEEEMVVEEEDPD) shows a compositional bias: acidic residues.

In terms of assembly, component of the transcriptionally active chromosome (TAC) complexes. Interacts with FSD2 and PRDA1. Interacts with FSD3 and CITRX/TRXZ. Binds to PTAC12/HMR/PAP5. As to expression, expressed in leaves, shoots, stems, cauline leaves, flower buds, flowers and siliques.

It localises to the plastid. Its subcellular location is the chloroplast. It is found in the chloroplast stroma. The protein resides in the chloroplast nucleoid. The protein localises to the nucleus. Plays an essential role in early steps of chloroplast development. Involved in the regulation of plastid gene expression. May positively regulate plastid-encoded RNA polymerase (PEP) activity through binding to FSD3 and CITRX/TRXZ. Involved in redox-mediated regulation of chloroplast development. Possesses disulfide reductase activity in vitro. Required for the proper function of the plastid transcriptional machinery and protein accumulation in thylakoid membranes. May function as molecular chaperone to ensure proper organization of the nucleoids in chloroplasts. May mediate some aspect of thylakoid structure or function that controls non-photochemical quenching (NPQ). Participates in the early light signaling events of photobody biogenesis in chloroplasts. May mediate the degradation of two repressors of chloroplast biogenesis, PIF1 and PIF3 in nucleus. Collaboratively with PTAC12/HMR/PAP5, involved in the regulation of thermoresponsive responses via the stabilization of PIF4 in the daytime to initiate thermomorphogenesis. This chain is Thioredoxin-like fold domain-containing protein MRL7, chloroplastic, found in Arabidopsis thaliana (Mouse-ear cress).